Consider the following 284-residue polypeptide: RNase adapter protein RapZ (284 aa).

Gly-8 to Ser-15 serves as a coordination point for ATP. Asp-56–Asn-59 contributes to the GTP binding site. Residues Arg-266 to Ser-284 form an RNA-binding region.

It belongs to the RapZ-like family. RapZ subfamily. In terms of assembly, homotrimer.

In terms of biological role, modulates the synthesis of GlmS, by affecting the processing and stability of the regulatory small RNA GlmZ. When glucosamine-6-phosphate (GlcN6P) concentrations are high in the cell, RapZ binds GlmZ and targets it to cleavage by RNase E. Consequently, GlmZ is inactivated and unable to activate GlmS synthesis. Under low GlcN6P concentrations, RapZ is sequestered and inactivated by an other regulatory small RNA, GlmY, preventing GlmZ degradation and leading to synthesis of GlmS. The polypeptide is RNase adapter protein RapZ (Klebsiella pneumoniae (strain 342)).